Consider the following 288-residue polypeptide: Tryptophan 2,3-dioxygenase (288 aa).

Residues 57 to 61, Tyr119, and Arg123 contribute to the substrate site; that span reads FIIQH. His246 provides a ligand contact to heme. Residue Thr260 coordinates substrate.

Belongs to the tryptophan 2,3-dioxygenase family. In terms of assembly, homotetramer. It depends on heme as a cofactor.

The catalysed reaction is L-tryptophan + O2 = N-formyl-L-kynurenine. It participates in amino-acid degradation; L-tryptophan degradation via kynurenine pathway; L-kynurenine from L-tryptophan: step 1/2. Functionally, heme-dependent dioxygenase that catalyzes the oxidative cleavage of the L-tryptophan (L-Trp) pyrrole ring and converts L-tryptophan to N-formyl-L-kynurenine. Catalyzes the oxidative cleavage of the indole moiety. This chain is Tryptophan 2,3-dioxygenase, found in Pseudomonas aeruginosa (strain ATCC 15692 / DSM 22644 / CIP 104116 / JCM 14847 / LMG 12228 / 1C / PRS 101 / PAO1).